Here is a 301-residue protein sequence, read N- to C-terminus: Thioredoxin-related transmembrane protein 2-A (301 aa).

The first 19 residues, 1-19, serve as a signal peptide directing secretion; the sequence is MSLIRGLISTIYYLPKIYK. The Extracellular segment spans residues 20–111; it reads WFYRPYYFLS…VVLFFRVDLR (92 aa). A helical membrane pass occupies residues 112-132; the sequence is FGLLYLTLCVVFLITCKPPAY. In terms of domain architecture, Thioredoxin spans 122–269; sequence VFLITCKPPA…IFQKYKKFSK (148 aa). Over 133 to 301 the chain is Cytoplasmic; the sequence is MGPENIKYFR…EEDSESKKDK (169 aa). The disordered stretch occupies residues 268–301; that stretch reads SKGEKPEEPQPVLEEESESPLEEEEEDSESKKDK. The span at 280 to 295 shows a compositional bias: acidic residues; the sequence is LEEESESPLEEEEEDS. The Di-lysine motif signature appears at 298–301; the sequence is KKDK.

In terms of assembly, monomer. Homodimer; disulfide-linked. Occurs in both reduced and oxidized monomeric form. Oxidative conditions increase homodimerization.

The protein resides in the endoplasmic reticulum membrane. Its subcellular location is the mitochondrion membrane. Endoplasmic reticulum and mitochondria-associated protein that probably functions as a regulator of cellular redox state and thereby regulates protein post-translational modification, protein folding and mitochondrial activity. The sequence is that of Thioredoxin-related transmembrane protein 2-A from Danio rerio (Zebrafish).